We begin with the raw amino-acid sequence, 187 residues long: UPF0398 protein LJ_1195 (187 aa).

This sequence belongs to the UPF0398 family.

The polypeptide is UPF0398 protein LJ_1195 (Lactobacillus johnsonii (strain CNCM I-12250 / La1 / NCC 533)).